The chain runs to 314 residues: MPVKIPDDLPAAEILESENIFVMSETRAANQDIRPMKVLILNLMPNKIETETQLLRLLGNTPLQVDVDLLRIHDKESKHTSIDHMNNFYRDFEAVRQKNYDGLIITGAPLGQIEFEEVSYWDHIREIIDWSQQHVTSVLFLCWAAHAALFHLYGLNRNLLEQKRSGVFVHRRTTQHFPLLRGFDDEFLAPHSRFAEMSLEQLKAHPELQVLTESDTAGAYMVLSRNNRNLFVMGHPEYQKSTLKDEYHRDLEQGLNPDVPQNYFRDDNPEKEPVARWHGHGSLLVSNWLNYYVYQLTPYNLDDMSGITPWENKQ.

The active-site Acyl-thioester intermediate is Cys-142. The substrate site is built by Lys-163 and Ser-192. His-235 acts as the Proton acceptor in catalysis. Glu-237 is an active-site residue. A substrate-binding site is contributed by Arg-249.

Belongs to the MetA family.

The protein localises to the cytoplasm. It carries out the reaction L-homoserine + succinyl-CoA = O-succinyl-L-homoserine + CoA. It participates in amino-acid biosynthesis; L-methionine biosynthesis via de novo pathway; O-succinyl-L-homoserine from L-homoserine: step 1/1. Functionally, transfers a succinyl group from succinyl-CoA to L-homoserine, forming succinyl-L-homoserine. This Shewanella woodyi (strain ATCC 51908 / MS32) protein is Homoserine O-succinyltransferase.